We begin with the raw amino-acid sequence, 317 residues long: Single myb histone 6 (317 aa).

In terms of domain architecture, HTH myb-type spans M1–S61. Positions W28–N57 form a DNA-binding region, H-T-H motif. The H15 domain occupies K121–P189. A coiled-coil region spans residues V244–L288.

Belongs to the histone H1/H5 family. SMH subfamily. In terms of assembly, forms a homodimer and heterodimers.

It localises to the nucleus. The protein localises to the chromosome. Its subcellular location is the nucleolus. The protein resides in the telomere. Binds preferentially double-stranded telomeric repeats, but may also bind to the single telomeric strand. This chain is Single myb histone 6 (SMH6), found in Zea mays (Maize).